The chain runs to 267 residues: Translation initiation factor 2 subunit alpha (267 aa).

The S1 motif domain occupies 12–83 (GEIVMATVER…KRKYANLSLR (72 aa)).

It belongs to the eIF-2-alpha family. As to quaternary structure, heterotrimer composed of an alpha, a beta and a gamma chain.

In terms of biological role, eIF-2 functions in the early steps of protein synthesis by forming a ternary complex with GTP and initiator tRNA. The chain is Translation initiation factor 2 subunit alpha from Methanopyrus kandleri (strain AV19 / DSM 6324 / JCM 9639 / NBRC 100938).